The primary structure comprises 310 residues: Dopamine receptor-interacting protein 1 (310 aa).

Interacts with DRD1.

Functionally, could be a regulator of the dopamine receptor signaling pathway. This Homo sapiens (Human) protein is Dopamine receptor-interacting protein 1.